We begin with the raw amino-acid sequence, 203 residues long: Endo-type membrane-bound lytic murein transglycosylase A (203 aa).

Positions Met-1–Gly-15 are cleaved as a signal peptide. Residue Cys-16 is the site of N-palmitoyl cysteine attachment. Residue Cys-16 is the site of S-diacylglycerol cysteine attachment.

Belongs to the transglycosylase Slt family.

It localises to the cell outer membrane. The catalysed reaction is Endolytic cleavage of the (1-&gt;4)-beta-glycosidic linkage between N-acetylmuramic acid (MurNAc) and N-acetylglucosamine (GlcNAc) residues in peptidoglycan with concomitant formation of a 1,6-anhydrobond in the MurNAc residue.. In terms of biological role, murein-degrading enzyme. May play a role in recycling of muropeptides during cell elongation and/or cell division. Preferentially cleaves at a distance of more than two disaccharide units from the ends of the glycan chain. This Escherichia coli O1:K1 / APEC protein is Endo-type membrane-bound lytic murein transglycosylase A.